The primary structure comprises 875 residues: Protein SEY1 (875 aa).

Over 1–749 the chain is Cytoplasmic; that stretch reads MVANGHFASN…KRSAIGGITQ (749 aa). A GB1/RHD3-type G domain is found at 49–307; the sequence is GFNYHLISVF…IPADGFAVYA (259 aa). Position 59 to 66 (59 to 66) interacts with GTP; sequence GSQSTGKS. A coiled-coil region spans residues 482–506; sequence SNYQQELSLYQKDLERISGQLRRDE. Positions 676 to 704 are disordered; it reads LDKWIGHTPSSATPADEEDLTPIGGVDED. Over residues 690–704 the composition is skewed to acidic residues; that stretch reads ADEEDLTPIGGVDED. The helical transmembrane segment at 750 to 770 threads the bilayer; that stretch reads VPLYFYGLLLALGWNEIMAVL. The Lumenal portion of the chain corresponds to 771–773; the sequence is RNP. The helical transmembrane segment at 774–794 threads the bilayer; that stretch reads AYFFLLFVCAIGAYVTYQLNL. Residues 795–875 are Cytoplasmic-facing; sequence WGPIIKMTEA…ADDDDVDDDF (81 aa). Residues 831–875 form a disordered region; it reads MAMSGARNATEEHEMSNLNRKSGERGGQKYRGEDVADDDDVDDDF. A compositionally biased stretch (basic and acidic residues) spans 839–864; that stretch reads ATEEHEMSNLNRKSGERGGQKYRGED. Residues 865–875 show a composition bias toward acidic residues; sequence VADDDDVDDDF.

The protein belongs to the TRAFAC class dynamin-like GTPase superfamily. GB1/RHD3 GTPase family. RHD3 subfamily.

The protein resides in the endoplasmic reticulum membrane. Functionally, cooperates with the reticulon proteins and tubule-shaping DP1 family proteins to generate and maintain the structure of the tubular endoplasmic reticulum network. Has GTPase activity, which is required for its function in ER organization. This is Protein SEY1 from Ajellomyces dermatitidis (strain ER-3 / ATCC MYA-2586) (Blastomyces dermatitidis).